The sequence spans 152 residues: Deoxyuridine 5'-triphosphate nucleotidohydrolase (152 aa).

Substrate contacts are provided by residues 71–73 (RSG), Asn-84, 88–90 (LID), and Met-98.

This sequence belongs to the dUTPase family. Mg(2+) is required as a cofactor.

The enzyme catalyses dUTP + H2O = dUMP + diphosphate + H(+). It participates in pyrimidine metabolism; dUMP biosynthesis; dUMP from dCTP (dUTP route): step 2/2. This enzyme is involved in nucleotide metabolism: it produces dUMP, the immediate precursor of thymidine nucleotides and it decreases the intracellular concentration of dUTP so that uracil cannot be incorporated into DNA. The protein is Deoxyuridine 5'-triphosphate nucleotidohydrolase of Klebsiella pneumoniae subsp. pneumoniae (strain ATCC 700721 / MGH 78578).